A 158-amino-acid polypeptide reads, in one-letter code: RNA pyrophosphohydrolase (158 aa).

The region spanning 6–150 (GYRLNVGIVL…KRDVYRKVMQ (145 aa)) is the Nudix hydrolase domain. Residues 39–60 (GGINIGETPEQAMYRELFEEIG) carry the Nudix box motif.

The protein belongs to the Nudix hydrolase family. RppH subfamily. The cofactor is a divalent metal cation.

Functionally, accelerates the degradation of transcripts by removing pyrophosphate from the 5'-end of triphosphorylated RNA, leading to a more labile monophosphorylated state that can stimulate subsequent ribonuclease cleavage. The protein is RNA pyrophosphohydrolase of Blochmanniella pennsylvanica (strain BPEN).